We begin with the raw amino-acid sequence, 277 residues long: Diaminopimelate epimerase (277 aa).

Positions 13, 46, and 65 each coordinate substrate. The active-site Proton donor is cysteine 74. Residues 75 to 76, asparagine 158, asparagine 191, and 209 to 210 each bind substrate; these read GN and ER. Residue cysteine 218 is the Proton acceptor of the active site. 219 to 220 provides a ligand contact to substrate; sequence GT.

It belongs to the diaminopimelate epimerase family. As to quaternary structure, homodimer.

It localises to the cytoplasm. It carries out the reaction (2S,6S)-2,6-diaminopimelate = meso-2,6-diaminopimelate. It functions in the pathway amino-acid biosynthesis; L-lysine biosynthesis via DAP pathway; DL-2,6-diaminopimelate from LL-2,6-diaminopimelate: step 1/1. Catalyzes the stereoinversion of LL-2,6-diaminopimelate (L,L-DAP) to meso-diaminopimelate (meso-DAP), a precursor of L-lysine and an essential component of the bacterial peptidoglycan. The protein is Diaminopimelate epimerase of Nitrosospira multiformis (strain ATCC 25196 / NCIMB 11849 / C 71).